Consider the following 974-residue polypeptide: Cell division control protein 15 (974 aa).

Residues Tyr-25 to Ile-272 form the Protein kinase domain. ATP-binding positions include Ile-31–Val-39 and Lys-54. Asp-146 functions as the Proton acceptor in the catalytic mechanism. The interval Cys-360–Leu-702 is self association domain. Residues Ser-554 to Pro-563 show a composition bias toward low complexity. Positions Ser-554 to Met-592 are disordered. Ser-561 and Ser-567 each carry phosphoserine. The span at Thr-564–Pro-579 shows a compositional bias: polar residues. The auto-inhibitory domain stretch occupies residues Thr-751–Thr-974. Residue Thr-870 is modified to Phosphothreonine. The disordered stretch occupies residues Ala-941–Thr-974. A compositionally biased stretch (basic and acidic residues) spans Thr-948–Asp-963.

It belongs to the protein kinase superfamily. Ser/Thr protein kinase family. In terms of assembly, homodimer. Interacts with TEM1. In terms of processing, phosphorylation by CDK1 reduces the binding to the mother spindle pole body. The extent of phosphorylation gradually increases during cell-cycle progression until some point during late anaphase/telophase when it is rapidly dephosphorylated by CDC14. Phosphorylation inhibits kinase activity and dephosphorylation by CDC14 activates CDC15.

It localises to the cytoplasm. The protein localises to the cytoskeleton. The protein resides in the spindle pole. It is found in the bud neck. It catalyses the reaction L-seryl-[protein] + ATP = O-phospho-L-seryl-[protein] + ADP + H(+). It carries out the reaction L-threonyl-[protein] + ATP = O-phospho-L-threonyl-[protein] + ADP + H(+). Kinase activity is inhibited by phosphorylation and activated by dephosphorylation by CDC14. Protein kinase of the mitotic exit network (MEN) essential for late nuclear division in the mitotic cycle. Promotes mitotic exit by phosphorylating DBF2 and directly switching on DBF2 kinase activity. Involved in the localization of DBF2 and DBF20 to the neck which is necessary to undergo cytokinesis. Plays a role in segregation of chromosomes during recovery from spindle checkpoint activation. Required for spindle pole localization of CDK1 and inactivation of CDC2 kinase activity at the end of mitosis. Required for spindle disassembly after meiosis II and plays a role in spore morphogenesis. This chain is Cell division control protein 15 (CDC15), found in Saccharomyces cerevisiae (strain ATCC 204508 / S288c) (Baker's yeast).